The sequence spans 417 residues: Argininosuccinate synthase (417 aa).

ATP is bound at residue 8–16; sequence AYSGGLDTS. Y87 is an L-citrulline binding site. Residue G117 coordinates ATP. T119, N123, and D124 together coordinate L-aspartate. N123 contacts L-citrulline. R127, S175, E259, and Y271 together coordinate L-citrulline.

It belongs to the argininosuccinate synthase family. Type 1 subfamily. Homotetramer.

It localises to the cytoplasm. The enzyme catalyses L-citrulline + L-aspartate + ATP = 2-(N(omega)-L-arginino)succinate + AMP + diphosphate + H(+). Its pathway is amino-acid biosynthesis; L-arginine biosynthesis; L-arginine from L-ornithine and carbamoyl phosphate: step 2/3. The protein is Argininosuccinate synthase of Clavibacter sepedonicus (Clavibacter michiganensis subsp. sepedonicus).